The following is a 110-amino-acid chain: Small ribosomal subunit protein eS25 (110 aa).

Residues 1-39 (MPPKAAGGKSKQIQASKAAAKGSSGGAGRKKWSKGRSRE) form a disordered region.

This sequence belongs to the eukaryotic ribosomal protein eS25 family.

This chain is Small ribosomal subunit protein eS25 (rps25), found in Dictyostelium discoideum (Social amoeba).